The following is a 221-amino-acid chain: Pre-rRNA-processing protein SRD1 (221 aa).

Polar residues predominate over residues 101–110 (SKNRVTSACN). 2 disordered regions span residues 101–121 (SKNRVTSACNSERRTTSQEAN) and 137–161 (ASITKKYSKKTTSRPKREKRQTILP). Positions 142–155 (KYSKKTTSRPKREK) are enriched in basic residues. Residues 168-193 (CSKCKDTWTIQWRSGPDQNRELCSPC) form a GATA-type zinc finger. The disordered stretch occupies residues 201-221 (LKKENEKKRQAADKRIDRNNP). Positions 203–221 (KENEKKRQAADKRIDRNNP) are enriched in basic and acidic residues.

The protein localises to the cytoplasm. It is found in the nucleus. Its function is as follows. Plays a direct or indirect role in pre-rRNA processing. The sequence is that of Pre-rRNA-processing protein SRD1 (SRD1) from Saccharomyces cerevisiae (strain ATCC 204508 / S288c) (Baker's yeast).